Reading from the N-terminus, the 62-residue chain is Metallothionein (62 aa).

Met-1 carries the post-translational modification N-acetylmethionine. Positions 1-30 (MDPQDCKCETGASCSCGTTCSCSNCKCTSC) are beta. The a divalent metal cation site is built by Cys-6, Cys-8, Cys-14, Cys-16, Cys-20, Cys-22, Cys-25, Cys-27, Cys-30, Cys-34, Cys-35, Cys-37, Cys-38, Cys-42, Cys-45, Cys-49, Cys-51, Cys-58, Cys-60, and Cys-61. The alpha stretch occupies residues 31–62 (KKSCCSCCPAECSKCSQGCHCEKGSKKCSCCN).

Belongs to the metallothionein superfamily. Type 1 family.

In terms of biological role, metallothioneins have a high content of cysteine residues that bind various heavy metals. This is Metallothionein (mt-a) from Xenopus laevis (African clawed frog).